Here is a 102-residue protein sequence, read N- to C-terminus: Acid shock protein (102 aa).

Residues 1-21 (MKKVLALVVAAAMGLSSAAFA) form the signal peptide. A compositionally biased stretch (low complexity) spans 22–41 (AETATTPAPTATTTKAAPAK). The propeptide occupies 22 to 58 (AETATTPAPTATTTKAAPAKTTHHKKQHKAAPAQKAQ). Residues 22–102 (AETATTPAPT…PAKPAAQPAA (81 aa)) are disordered. Residues 80–90 (AAKKHAKKHSH) are compositionally biased toward basic residues. Residues 91–102 (QQPAKPAAQPAA) show a composition bias toward low complexity.

It belongs to the Asr family. In terms of processing, proteolytic processing gives rise to the active protein.

It localises to the periplasm. Required for growth and/or survival at acidic conditions. The chain is Acid shock protein from Escherichia coli O45:K1 (strain S88 / ExPEC).